The primary structure comprises 170 residues: Peptide deformylase (170 aa).

Residues Cys-91 and His-133 each contribute to the Fe cation site. The active site involves Glu-134. His-137 is a Fe cation binding site.

It belongs to the polypeptide deformylase family. It depends on Fe(2+) as a cofactor.

The enzyme catalyses N-terminal N-formyl-L-methionyl-[peptide] + H2O = N-terminal L-methionyl-[peptide] + formate. Functionally, removes the formyl group from the N-terminal Met of newly synthesized proteins. Requires at least a dipeptide for an efficient rate of reaction. N-terminal L-methionine is a prerequisite for activity but the enzyme has broad specificity at other positions. The polypeptide is Peptide deformylase (Glaesserella parasuis serovar 5 (strain SH0165) (Haemophilus parasuis)).